A 405-amino-acid chain; its full sequence is Probable tRNA sulfurtransferase (405 aa).

Positions 75–183 (PRAAGAAADV…QNLAYVYLET (109 aa)) constitute a THUMP domain. ATP-binding positions include 201 to 202 (LM), Lys-285, Gly-307, and Gln-316.

Belongs to the ThiI family.

It is found in the cytoplasm. It catalyses the reaction [ThiI sulfur-carrier protein]-S-sulfanyl-L-cysteine + a uridine in tRNA + 2 reduced [2Fe-2S]-[ferredoxin] + ATP + H(+) = [ThiI sulfur-carrier protein]-L-cysteine + a 4-thiouridine in tRNA + 2 oxidized [2Fe-2S]-[ferredoxin] + AMP + diphosphate. The enzyme catalyses [ThiS sulfur-carrier protein]-C-terminal Gly-Gly-AMP + S-sulfanyl-L-cysteinyl-[cysteine desulfurase] + AH2 = [ThiS sulfur-carrier protein]-C-terminal-Gly-aminoethanethioate + L-cysteinyl-[cysteine desulfurase] + A + AMP + 2 H(+). Its pathway is cofactor biosynthesis; thiamine diphosphate biosynthesis. Functionally, catalyzes the ATP-dependent transfer of a sulfur to tRNA to produce 4-thiouridine in position 8 of tRNAs, which functions as a near-UV photosensor. Also catalyzes the transfer of sulfur to the sulfur carrier protein ThiS, forming ThiS-thiocarboxylate. This is a step in the synthesis of thiazole, in the thiamine biosynthesis pathway. The sulfur is donated as persulfide by IscS. This chain is Probable tRNA sulfurtransferase, found in Methanosarcina mazei (strain ATCC BAA-159 / DSM 3647 / Goe1 / Go1 / JCM 11833 / OCM 88) (Methanosarcina frisia).